We begin with the raw amino-acid sequence, 696 residues long: Polyribonucleotide nucleotidyltransferase (696 aa).

Asp-483 and Asp-489 together coordinate Mg(2+). Residues 550–609 (PRITTIYVKTDKIRDVIGSGGKNIRGITEATGVTIDIDDTGKINIASTDKAACDLAIKMI) form the KH domain. The S1 motif domain maps to 619–687 (GKLYMGLVKK…KQGKIKLSRK (69 aa)).

It belongs to the polyribonucleotide nucleotidyltransferase family. Mg(2+) serves as cofactor.

The protein resides in the cytoplasm. It catalyses the reaction RNA(n+1) + phosphate = RNA(n) + a ribonucleoside 5'-diphosphate. In terms of biological role, involved in mRNA degradation. Catalyzes the phosphorolysis of single-stranded polyribonucleotides processively in the 3'- to 5'-direction. In Geotalea uraniireducens (strain Rf4) (Geobacter uraniireducens), this protein is Polyribonucleotide nucleotidyltransferase.